The primary structure comprises 428 residues: Isocitrate lyase 1 (428 aa).

Residue 91-93 (SGW) coordinates substrate. Asp153 is a Mg(2+) binding site. The Proton acceptor role is filled by Cys191. Residues 192–193 (GH), Arg228, 313–317 (NCSPS), and Thr347 contribute to the substrate site.

Belongs to the isocitrate lyase/PEP mutase superfamily. Isocitrate lyase family. Homotetramer. Mg(2+) is required as a cofactor.

The enzyme catalyses D-threo-isocitrate = glyoxylate + succinate. The catalysed reaction is (2S,3R)-3-hydroxybutane-1,2,3-tricarboxylate = pyruvate + succinate. It participates in carbohydrate metabolism; glyoxylate cycle; (S)-malate from isocitrate: step 1/2. In terms of biological role, involved in the persistence and virulence of M.tuberculosis. Catalyzes the reversible formation of succinate and glyoxylate from isocitrate, a key step of the glyoxylate cycle, which operates as an anaplerotic route for replenishing the tricarboxylic acid cycle during growth on fatty acid substrates. It also catalyzes the formation of pyruvate and succinate from 2-methylisocitrate, a key step in the methylcitrate cycle (propionate degradation route). This is Isocitrate lyase 1 (icl1) from Mycobacterium tuberculosis (strain ATCC 35801 / TMC 107 / Erdman).